We begin with the raw amino-acid sequence, 2157 residues long: DExH-box ATP-dependent RNA helicase DExH14 (2157 aa).

Positions 374-394 (KAASNTQSRMPTYGTQVTVQT) are disordered. The segment covering 375 to 394 (AASNTQSRMPTYGTQVTVQT) has biased composition (polar residues). Positions 517–699 (QTVYHTNENI…FLRVNTDTGL (183 aa)) constitute a Helicase ATP-binding 1 domain. Residue 530–537 (APTGAGKT) participates in ATP binding. The DEVH box signature appears at 641–644 (DEVH). A Helicase C-terminal 1 domain is found at 734 to 932 (CYKKVVDSIK…SLKDNLNAEV (199 aa)). The 308-residue stretch at 1008–1315 (CTELGRVASH…LHAETYFTIS (308 aa)) folds into the SEC63 1 domain. The 176-residue stretch at 1365–1540 (HVLYHTDNNV…WLGVGEIGLF (176 aa)) folds into the Helicase ATP-binding 2 domain. 1378–1385 (APTGSGKT) serves as a coordination point for ATP. The DEIH box signature appears at 1482–1485 (DEIH). The Helicase C-terminal 2 domain maps to 1571 to 1780 (NKPAYAAICT…GTIGNKEDAV (210 aa)). The 312-residue stretch at 1839 to 2150 (PTMLGTIASQ…YLGFEQEHSI (312 aa)) folds into the SEC63 2 domain.

Belongs to the DExH box helicase family.

It is found in the nucleus. It carries out the reaction ATP + H2O = ADP + phosphate + H(+). RNA helicase that plays an essential role in pre-mRNA splicing as component of the U5 snRNP and U4/U6-U5 tri-snRNP complexes. Involved in spliceosome assembly, activation and disassembly. The protein is DExH-box ATP-dependent RNA helicase DExH14 of Arabidopsis thaliana (Mouse-ear cress).